A 395-amino-acid polypeptide reads, in one-letter code: S-adenosylmethionine synthase (395 aa).

Residue histidine 14 participates in ATP binding. Aspartate 16 lines the Mg(2+) pocket. Residue glutamate 42 participates in K(+) binding. L-methionine contacts are provided by glutamate 55 and glutamine 98. A flexible loop region spans residues 98–108; the sequence is QSPDIALGVDK. ATP contacts are provided by residues 174 to 176, 240 to 241, aspartate 249, 255 to 256, alanine 272, and lysine 276; these read DGK, RF, and RK. Aspartate 249 contacts L-methionine. Lysine 280 serves as a coordination point for L-methionine.

This sequence belongs to the AdoMet synthase family. As to quaternary structure, homotetramer; dimer of dimers. Mg(2+) is required as a cofactor. It depends on K(+) as a cofactor.

Its subcellular location is the cytoplasm. It catalyses the reaction L-methionine + ATP + H2O = S-adenosyl-L-methionine + phosphate + diphosphate. The protein operates within amino-acid biosynthesis; S-adenosyl-L-methionine biosynthesis; S-adenosyl-L-methionine from L-methionine: step 1/1. In terms of biological role, catalyzes the formation of S-adenosylmethionine (AdoMet) from methionine and ATP. The overall synthetic reaction is composed of two sequential steps, AdoMet formation and the subsequent tripolyphosphate hydrolysis which occurs prior to release of AdoMet from the enzyme. The chain is S-adenosylmethionine synthase from Thermotoga maritima (strain ATCC 43589 / DSM 3109 / JCM 10099 / NBRC 100826 / MSB8).